Consider the following 317-residue polypeptide: DNA repair nuclease/redox regulator APEX1 (317 aa).

Residues 1-32 form a necessary for interaction with YBX1, binding to RNA, association together with NPM1 to rRNA, endoribonuclease activity on abasic RNA and localization in the nucleoli region; sequence MPKRGKRAAAEDGEEPKSEPETKKSKGAAKKT. The interval 1–57 is disordered; sequence MPKRGKRAAAEDGEEPKSEPETKKSKGAAKKTEKEAAGEGPVLYEDPPDQKTSASGK. Lys6 bears the N6-acetyllysine; by EP300 mark. Residues 8 to 12 carry the Nuclear localization signal (NLS) motif; sequence AAAED. Basic and acidic residues predominate over residues 15–37; that stretch reads EPKSEPETKKSKGAAKKTEKEAA. Phosphoserine is present on Ser18. Residues 22 to 32 form a necessary for interaction with NPM1 and for efficient rRNA binding region; sequence TKKSKGAAKKT. N6-acetyllysine occurs at positions 26, 30, 31, and 34. The residue at position 53 (Ser53) is a Phosphoserine. The Nuclear export signal (NES) signature appears at 63 to 79; that stretch reads ICSWNVDGLRAWIKKKG. Cys64 is subject to S-nitrosocysteine; alternate. Cys64 and Cys92 are joined by a disulfide. Asp69 is a Mg(2+) binding site. Position 92 is an S-nitrosocysteine; alternate (Cys92). Glu95 serves as a coordination point for Mg(2+). Tyr170 is a catalytic residue. The residue at position 196 (Lys196) is an N6-acetyllysine. Positions 209 and 211 each coordinate Mg(2+). The active-site Proton donor/acceptor is Asp209. Thr232 carries the phosphothreonine; by CDK5 modification. Positions 288–317 are mitochondrial targeting sequence (MTS); sequence HSLLPALCDSKIRSKALGSDHCPITLYLAL. Residue Asp307 coordinates Mg(2+). Cys309 carries the S-nitrosocysteine modification.

This sequence belongs to the DNA repair enzymes AP/ExoA family. As to quaternary structure, monomer. Homodimer; disulfide-linked. Component of the SET complex, composed of at least APEX1, SET, ANP32A, HMGB2, NME1 and TREX1. Associates with the dimer XRCC5/XRCC6 in a DNA-dependent manner. Interacts with SIRT1; the interaction is increased in the context of genotoxic stress. Interacts with HDAC1, HDAC2 and HDAC3; the interactions are not dependent on the APEX1 acetylation status. Interacts with XRCC1; the interaction is induced by SIRT1 and increased with the APEX1 acetylated form. Interacts with NPM1 (via N-terminal domain); the interaction is RNA-dependent and decreases in hydrogen peroxide-damaged cells. Interacts (via N-terminus) with YBX1 (via C-terminus); the interaction is increased in presence of APEX1 acetylated. Interacts with HNRNPL; the interaction is DNA-dependent. Interacts (via N-terminus) with KPNA1 and KPNA2. Interacts with TXN; the interaction stimulates the FOS/JUN AP-1 complex DNA-binding activity in a redox-dependent manner. Interacts with GZMA, KRT8, MDM2, POLB, PRDX6, PRPF19, RPLP0, TOMM20 and WDR77. Binds to CDK5. Mg(2+) is required as a cofactor. Requires Mn(2+) as cofactor. Phosphorylated. Phosphorylation by kinase PKC or casein kinase CK2 results in enhanced redox activity that stimulates binding of the FOS/JUN AP-1 complex to its cognate binding site. AP-endodeoxyribonuclease activity is not affected by CK2-mediated phosphorylation. Phosphorylation of Thr-232 by CDK5 in response to MPP(+)/MPTP (1-methyl-4-phenylpyridinium) reduces AP-endodeoxyribonuclease activity resulting in accumulation of DNA damage and contributing to neuronal death. In terms of processing, acetylated on Lys-6. Acetylation is increased by the transcriptional coactivator EP300 acetyltransferase, genotoxic agents like H(2)O(2) and methyl methanesulfonate (MMS). Acetylation increases its binding affinity to the negative calcium response element (nCaRE) DNA promoter. The acetylated form induces a stronger binding of YBX1 to the Y-box sequence in the MDR1 promoter than the unacetylated form. Deacetylated on lysines. Lys-6 is deacetylated by SIRT1. Post-translationally, cleaved at Lys-30 by granzyme A to create the mitochondrial form; leading in reduction of binding to DNA, AP endodeoxyribonuclease activity, redox activation of transcription factors and to enhanced cell death. Cleaved by granzyme K; leading to intracellular ROS accumulation and enhanced cell death after oxidative stress. Cys-64 and Cys-92 are nitrosylated in response to nitric oxide (NO) and lead to the exposure of the nuclear export signal (NES). In terms of processing, ubiquitinated by MDM2; leading to translocation to the cytoplasm and proteasomal degradation.

Its subcellular location is the nucleus. It is found in the nucleolus. The protein resides in the nucleus speckle. It localises to the endoplasmic reticulum. The protein localises to the cytoplasm. Its subcellular location is the mitochondrion. It catalyses the reaction a deoxyribonucleotide-2'-deoxyribose-5'-monophosphate-DNA + H2O = a 5'-end 2'-deoxyribose-5'-monophosphate-DNA + a 3'-end 2'-deoxyribonucleotide-DNA + H(+). The enzyme catalyses Exonucleolytic cleavage in the 3'- to 5'-direction to yield nucleoside 5'-phosphates.. It carries out the reaction a 3'-end 2'-deoxyribonucleotide-3'-phosphoglycolate-DNA + H2O = 2-phosphoglycolate + a 3'-end 2'-deoxyribonucleotide-DNA + H(+). The catalysed reaction is a 3'-end 2'-deoxyribonucleotide-8-oxoguanine-DNA + H2O = 8-oxo-dGMP + a 3'-end 2'-deoxyribonucleotide-DNA + H(+). NPM1 stimulates endodeoxyribonuclease activity on double-stranded DNA with AP sites, but inhibits endoribonuclease activity on single-stranded RNA containing AP sites. Multifunctional protein that plays a central role in the cellular response to oxidative stress. The two major activities of APEX1 are DNA repair and redox regulation of transcriptional factors. Functions as an apurinic/apyrimidinic (AP) endodeoxyribonuclease in the base excision repair (BER) pathway of DNA lesions induced by oxidative and alkylating agents. Initiates repair of AP sites in DNA by catalyzing hydrolytic incision of the phosphodiester backbone immediately adjacent to the damage, generating a single-strand break with 5'-deoxyribose phosphate and 3'-hydroxyl ends. Also incises at AP sites in the DNA strand of DNA/RNA hybrids, single-stranded DNA regions of R-loop structures, and single-stranded RNA molecules. Operates at switch sites of immunoglobulin (Ig) constant regions where it mediates Ig isotype class switch recombination. Processes AP sites induced by successive action of AICDA and UNG. Generates staggered nicks in opposite DNA strands resulting in the formation of double-strand DNA breaks that are finally resolved via non-homologous end joining repair pathway. Has 3'-5' exodeoxyribonuclease activity on mismatched deoxyribonucleotides at the 3' termini of nicked or gapped DNA molecules during short-patch BER. Possesses DNA 3' phosphodiesterase activity capable of removing lesions (such as phosphoglycolate and 8-oxoguanine) blocking the 3' side of DNA strand breaks. Also acts as an endoribonuclease involved in the control of single-stranded RNA metabolism. Plays a role in regulating MYC mRNA turnover by preferentially cleaving in between UA and CA dinucleotides of the MYC coding region determinant (CRD). In association with NMD1, plays a role in the rRNA quality control process during cell cycle progression. Acts as a loading factor for POLB onto non-incised AP sites in DNA and stimulates the 5'-terminal deoxyribose 5'-phosphate (dRp) excision activity of POLB. Exerts reversible nuclear redox activity to regulate DNA binding affinity and transcriptional activity of transcriptional factors by controlling the redox status of their DNA-binding domain, such as the FOS/JUN AP-1 complex after exposure to IR. Involved in calcium-dependent down-regulation of parathyroid hormone (PTH) expression by binding to negative calcium response elements (nCaREs). Together with HNRNPL or the dimer XRCC5/XRCC6, associates with nCaRE, acting as an activator of transcriptional repression. May also play a role in the epigenetic regulation of gene expression by participating in DNA demethylation. Stimulates the YBX1-mediated MDR1 promoter activity, when acetylated at Lys-6 and Lys-7, leading to drug resistance. Plays a role in protection from granzyme-mediated cellular repair leading to cell death. Binds DNA and RNA. Associates, together with YBX1, on the MDR1 promoter. Together with NPM1, associates with rRNA. This chain is DNA repair nuclease/redox regulator APEX1 (Apex1), found in Rattus norvegicus (Rat).